We begin with the raw amino-acid sequence, 199 residues long: 3-isopropylmalate dehydratase small subunit (199 aa).

Belongs to the LeuD family. LeuD type 1 subfamily. Heterodimer of LeuC and LeuD.

The enzyme catalyses (2R,3S)-3-isopropylmalate = (2S)-2-isopropylmalate. Its pathway is amino-acid biosynthesis; L-leucine biosynthesis; L-leucine from 3-methyl-2-oxobutanoate: step 2/4. Its function is as follows. Catalyzes the isomerization between 2-isopropylmalate and 3-isopropylmalate, via the formation of 2-isopropylmaleate. This is 3-isopropylmalate dehydratase small subunit from Leifsonia xyli subsp. xyli (strain CTCB07).